The following is a 490-amino-acid chain: Aspartyl/glutamyl-tRNA(Asn/Gln) amidotransferase subunit B (490 aa).

Belongs to the GatB/GatE family. GatB subfamily. As to quaternary structure, heterotrimer of A, B and C subunits.

The catalysed reaction is L-glutamyl-tRNA(Gln) + L-glutamine + ATP + H2O = L-glutaminyl-tRNA(Gln) + L-glutamate + ADP + phosphate + H(+). It catalyses the reaction L-aspartyl-tRNA(Asn) + L-glutamine + ATP + H2O = L-asparaginyl-tRNA(Asn) + L-glutamate + ADP + phosphate + 2 H(+). Functionally, allows the formation of correctly charged Asn-tRNA(Asn) or Gln-tRNA(Gln) through the transamidation of misacylated Asp-tRNA(Asn) or Glu-tRNA(Gln) in organisms which lack either or both of asparaginyl-tRNA or glutaminyl-tRNA synthetases. The reaction takes place in the presence of glutamine and ATP through an activated phospho-Asp-tRNA(Asn) or phospho-Glu-tRNA(Gln). This is Aspartyl/glutamyl-tRNA(Asn/Gln) amidotransferase subunit B from Methylorubrum extorquens (strain PA1) (Methylobacterium extorquens).